The following is a 614-amino-acid chain: Translation initiation factor IF-2 (614 aa).

Residues 115–283 (ARAPIVTIMG…ILLIAELNDY (169 aa)) enclose the tr-type G domain. The G1 stretch occupies residues 124–131 (GHVDHGKT). Residue 124–131 (GHVDHGKT) participates in GTP binding. Positions 149–153 (GITQH) are G2. Positions 170 to 173 (DTPG) are G3. GTP is bound by residues 170–174 (DTPGH) and 224–227 (NKMD). A G4 region spans residues 224–227 (NKMD). Positions 260 to 262 (SAL) are G5.

It belongs to the TRAFAC class translation factor GTPase superfamily. Classic translation factor GTPase family. IF-2 subfamily.

Its subcellular location is the cytoplasm. Its function is as follows. One of the essential components for the initiation of protein synthesis. Protects formylmethionyl-tRNA from spontaneous hydrolysis and promotes its binding to the 30S ribosomal subunits. Also involved in the hydrolysis of GTP during the formation of the 70S ribosomal complex. In Ureaplasma urealyticum serovar 10 (strain ATCC 33699 / Western), this protein is Translation initiation factor IF-2.